We begin with the raw amino-acid sequence, 134 residues long: uncharacterized protein (134 aa).

It to E.coli YbcV and YdfO.

This is an uncharacterized protein from Escherichia coli (strain K12).